Consider the following 320-residue polypeptide: Esterase LipI (320 aa).

Active-site residues include Ser165, Asp261, and His291.

It belongs to the 'GDXG' lipolytic enzyme family.

The enzyme catalyses a fatty acid ester + H2O = an aliphatic alcohol + a fatty acid + H(+). It carries out the reaction a butanoate ester + H2O = an aliphatic alcohol + butanoate + H(+). The catalysed reaction is an octanoate ester + H2O = an aliphatic alcohol + octanoate + H(+). It catalyses the reaction decanoate ester + H2O = decanoate + an aliphatic alcohol + H(+). The enzyme catalyses an acetyl ester + H2O = an aliphatic alcohol + acetate + H(+). It carries out the reaction a dodecanoate ester + H2O = an aliphatic alcohol + dodecanoate + H(+). Inhibited by ionic detergents SDS (anions) and CTAB (cationic). Strongly inhibited by Zn(2+). In terms of biological role, esterase that can hydrolyze short-chain esters with the carbon chain containing 2 to 12 carbon atoms. In vitro, pNP-butyrate is the preferred substrate. The sequence is that of Esterase LipI from Mycobacterium tuberculosis (strain ATCC 25618 / H37Rv).